Reading from the N-terminus, the 309-residue chain is Neck protein gp13 (309 aa).

In terms of assembly, gp13 and gp14 form a hetero-oligomer complex with a stoichiometry of 10:5.

The protein resides in the virion. Its function is as follows. Plays a role in the association of the virion head and tail after packaging of viral DNA within the head. Together with gp14, forms a neck at the portal vertex of the head to be ready for the tail attachment. The protein is Neck protein gp13 (13) of Escherichia coli (Bacteriophage T4).